The sequence spans 354 residues: Putative F-box/kelch-repeat protein At5g03000 (354 aa).

In terms of domain architecture, F-box spans 37–86; it reads PTVFSSLPDELILNCLARVSRFYRPSLSLVNKEFQSLIASPDLEATRSRI. Kelch repeat units follow at residues 143 to 189 and 190 to 236; these read EIYI…VIDG and KIYV…FPGK.

The chain is Putative F-box/kelch-repeat protein At5g03000 from Arabidopsis thaliana (Mouse-ear cress).